The sequence spans 371 residues: MASGISRTPATGVTAGGGDDEEAAWLHALELISGFTVSMTLKAAIQLGLIDALTAAADGRALTAGELVAQLPAVDDAEAATSVDRMLRLLASFNVVRCSTEAGPGGDPLRRYSPAPVCRWFTAGDNHQGSLAPRLMLDVDEDNLSTWHQMAAAVVSGGPSAFERAHGMPLFEYMGTNHRFNMLFNQAMSQQSMMVMNKLLDRFHGFDGISVLVDVGGGTGVTLKMIISRYKHITGVNFDLPHVISQAPSLPGVNHVAGNMFESVPKGDAIFLKSMLLRNDEECIKILKNCHYALSDNGKVIVVDIVLPETPKPVPEAQNPLRMDVMMLNNLRGGKIRTEQEYAKLAMDSGFSGSFRTTYIFANFMAIELCK.

137 to 143 (LDVDEDN) is a binding site for substrate. The substrate binding stretch occupies residues 170–188 (LFEYMGTNHRFNMLFNQAM). Positions 216, 239, 260, and 273 each coordinate S-adenosyl-L-methionine.

This sequence belongs to the class I-like SAM-binding methyltransferase superfamily. Cation-independent O-methyltransferase family. COMT subfamily.

The sequence is that of Probable inactive methyltransferase Os04g0175900 from Oryza sativa subsp. japonica (Rice).